The chain runs to 583 residues: Thiol:disulfide interchange protein DsbD (583 aa).

The N-terminal stretch at 1–18 (MRRLFLLLFMLFTTLAHA) is a signal peptide. Cystine bridges form between Cys-118–Cys-124 and Cys-186–Cys-306. A run of 8 helical transmembrane segments spans residues 168–188 (GLGL…PCSL), 214–234 (SYVL…ALLG), 245–265 (WVLG…FGFF), 289–309 (LIGC…CMTA), 326–346 (FGGL…LLLV), 359–379 (WMNL…IYML), 382–402 (VLNP…VAYC), and 413–433 (LLHL…MLLV). The region spanning 458 to 581 (VTAHDAFTTV…FLQRWTQTRE (124 aa)) is the Thioredoxin domain. An intrachain disulfide couples Cys-496 to Cys-499.

The protein belongs to the thioredoxin family. DsbD subfamily.

The protein localises to the cell inner membrane. It catalyses the reaction [protein]-dithiol + NAD(+) = [protein]-disulfide + NADH + H(+). It carries out the reaction [protein]-dithiol + NADP(+) = [protein]-disulfide + NADPH + H(+). Functionally, required to facilitate the formation of correct disulfide bonds in some periplasmic proteins and for the assembly of the periplasmic c-type cytochromes. Acts by transferring electrons from cytoplasmic thioredoxin to the periplasm. This transfer involves a cascade of disulfide bond formation and reduction steps. The chain is Thiol:disulfide interchange protein DsbD from Pseudomonas fluorescens (strain ATCC BAA-477 / NRRL B-23932 / Pf-5).